Here is a 229-residue protein sequence, read N- to C-terminus: Artemin (229 aa).

N-acetylalanine is present on Ala1. The Ferritin-like diiron domain maps to 25–173 (HNFDPECEKA…DCLSNLHCIG (149 aa)).

Belongs to the ferritin family.

The chain is Artemin from Artemia salina (Brine shrimp).